The sequence spans 96 residues: MFKDKNKIIKSVEKINKLEEGLSLFEEGDEEYLSVLVKIQGLYDEISDTALECFKEMTTKIRKTGQKRIIKGIDQLPHTIKENIADQVNDFKGGAI.

This is SPbeta prophage-derived uncharacterized protein YosV (yosV) from Bacillus subtilis (strain 168).